A 106-amino-acid chain; its full sequence is Large ribosomal subunit protein uL24 (106 aa).

This sequence belongs to the universal ribosomal protein uL24 family. Part of the 50S ribosomal subunit.

Functionally, one of two assembly initiator proteins, it binds directly to the 5'-end of the 23S rRNA, where it nucleates assembly of the 50S subunit. In terms of biological role, one of the proteins that surrounds the polypeptide exit tunnel on the outside of the subunit. The protein is Large ribosomal subunit protein uL24 of Bordetella avium (strain 197N).